Here is a 387-residue protein sequence, read N- to C-terminus: EP300-interacting inhibitor of differentiation 3 (387 aa).

The span at 1 to 19 shows a compositional bias: basic and acidic residues; the sequence is MSEEKCSLTGGEEKGEELA. Residues 1–77 form a disordered region; it reads MSEEKCSLTG…SDDLSPEAPC (77 aa). Over residues 32 to 72 the composition is skewed to acidic residues; it reads EEDDDDDEEALKKEEEEEEEEEEEDEEEEEEGPDSSSDDLS.

The protein belongs to the NSE4 family. In terms of assembly, component of the SMC5-SMC6 complex which consists at least of SMC5, SMC6, NSMCE2, NSMCE1, NSMCE4A or EID3 and NSMCE3. NSMCE1, NSMCE4A or EID3 and NSMCE3 probably form a subcomplex that bridges the head domains of the SMC5:SMC6 heterodimer. Homodimer, and heterodimer with EID2. Interacts with the C-terminal region of CREBBP.

Its subcellular location is the nucleus. The protein localises to the cytoplasm. It localises to the chromosome. It is found in the telomere. In terms of biological role, tissue-specific component of the SMC5-SMC6 complex, a complex involved in repair of DNA double-strand breaks by homologous recombination. The complex may promote sister chromatid homologous recombination by recruiting the SMC1-SMC3 cohesin complex to double-strand breaks. The complex is required for telomere maintenance via recombination and mediates sumoylation of shelterin complex (telosome) components. Functionally, acts as a repressor of nuclear receptor-dependent transcription possibly by interfering with CREBBP-dependent coactivation. May function as a coinhibitor of other CREBBP/EP300-dependent transcription factors. This chain is EP300-interacting inhibitor of differentiation 3, found in Rattus norvegicus (Rat).